Reading from the N-terminus, the 226-residue chain is Putative integrase V10 (226 aa).

Catalysis depends on residues R97, H174, and R177. The active-site O-(3'-phospho-DNA)-tyrosine intermediate is the Y210.

The protein belongs to the 'phage' integrase family.

In terms of biological role, may catalyze site-specific integration of viral genome into host or helper virus DNA. The polypeptide is Putative integrase V10 (Acanthamoeba polyphaga (Amoeba)).